We begin with the raw amino-acid sequence, 281 residues long: Elongation factor Ts (281 aa).

Residues 80–83 (TDFV) form an involved in Mg(2+) ion dislocation from EF-Tu region.

It belongs to the EF-Ts family.

Its subcellular location is the cytoplasm. In terms of biological role, associates with the EF-Tu.GDP complex and induces the exchange of GDP to GTP. It remains bound to the aminoacyl-tRNA.EF-Tu.GTP complex up to the GTP hydrolysis stage on the ribosome. The chain is Elongation factor Ts from Aliivibrio fischeri (strain MJ11) (Vibrio fischeri).